A 214-amino-acid chain; its full sequence is NKG2-D type II integral membrane protein (214 aa).

Residues 1 to 56 lie on the Cytoplasmic side of the membrane; the sequence is MGWIRDRRSPSSMEIRELHNRDVINRGAFKSRQKRTQTLITSKCGENPSPFFLARS. The helical; Signal-anchor for type II membrane protein transmembrane segment at 57 to 77 threads the bilayer; that stretch reads IAIAMGIRFIVMVMIYSGMII. At 78-214 the chain is on the extracellular side; that stretch reads NLLFNQEAPS…NTYICMKRTV (137 aa). 2 disulfide bridges follow: Cys-94/Cys-103 and Cys-97/Cys-108. The C-type lectin domain occupies 98 to 210; sequence PKNWICYRNS…CLTLNTYICM (113 aa). 4 N-linked (GlcNAc...) asparagine glycosylation sites follow: Asn-113, Asn-129, Asn-161, and Asn-184. 2 cysteine pairs are disulfide-bonded: Cys-125/Cys-209 and Cys-187/Cys-201.

As to quaternary structure, homodimer; disulfide-linked. Heterohexamer composed of two subunits of KLRK1 and four subunits of HCST/DAP10. Interacts (via transmembrane domain) with HCST/DAP10 (via transmembrane domain); the interaction is required for KLRK1 NK cell surface and induces NK cell-mediated cytotoxicity. Can form disulfide-bonded heterodimer with CD94. Interacts with CEACAM1; recruits PTPN6 that dephosphorylates VAV1. As to expression, detected in peripheral blood leukocytes, macrophages, monocytes and natural killer cells.

The protein resides in the cell membrane. Functionally, functions as an activating and costimulatory receptor involved in immunosurveillance upon binding to various cellular stress-inducible ligands displayed at the surface of autologous tumor cells and virus-infected cells. Provides both stimulatory and costimulatory innate immune responses on activated killer (NK) cells, leading to cytotoxic activity. Acts as a costimulatory receptor for T-cell receptor (TCR) in CD8(+) T-cell-mediated adaptive immune responses by amplifying T-cell activation. Stimulates perforin-mediated elimination of ligand-expressing tumor cells. Signaling involves calcium influx, culminating in the expression of TNF-alpha. Participates in NK cell-mediated bone marrow graft rejection. May play a regulatory role in differentiation and survival of NK cells. Binds to ligands belonging to various subfamilies of MHC class I-related glycoproteins. The chain is NKG2-D type II integral membrane protein (KLRK1) from Sus scrofa (Pig).